A 174-amino-acid chain; its full sequence is Endoribonuclease YbeY (174 aa).

3 residues coordinate Zn(2+): His124, His128, and His134.

The protein belongs to the endoribonuclease YbeY family. Zn(2+) is required as a cofactor.

It is found in the cytoplasm. Functionally, single strand-specific metallo-endoribonuclease involved in late-stage 70S ribosome quality control and in maturation of the 3' terminus of the 16S rRNA. The chain is Endoribonuclease YbeY from Synechococcus elongatus (strain ATCC 33912 / PCC 7942 / FACHB-805) (Anacystis nidulans R2).